Consider the following 311-residue polypeptide: Aspartate carbamoyltransferase catalytic subunit (311 aa).

Residues arginine 55 and threonine 56 each coordinate carbamoyl phosphate. Lysine 85 contributes to the L-aspartate binding site. Positions 106, 134, and 137 each coordinate carbamoyl phosphate. L-aspartate is bound by residues arginine 167 and arginine 228. The carbamoyl phosphate site is built by leucine 266 and proline 267.

It belongs to the aspartate/ornithine carbamoyltransferase superfamily. ATCase family. Heterododecamer (2C3:3R2) of six catalytic PyrB chains organized as two trimers (C3), and six regulatory PyrI chains organized as three dimers (R2).

It carries out the reaction carbamoyl phosphate + L-aspartate = N-carbamoyl-L-aspartate + phosphate + H(+). Its pathway is pyrimidine metabolism; UMP biosynthesis via de novo pathway; (S)-dihydroorotate from bicarbonate: step 2/3. Catalyzes the condensation of carbamoyl phosphate and aspartate to form carbamoyl aspartate and inorganic phosphate, the committed step in the de novo pyrimidine nucleotide biosynthesis pathway. This is Aspartate carbamoyltransferase catalytic subunit from Psychromonas ingrahamii (strain DSM 17664 / CCUG 51855 / 37).